The following is a 324-amino-acid chain: MESPNRTTIQEFIFSAFPYSWVKSVVCFVPLLFIYAFIVVGNLVIITVVQLNTHLHTPMYTFISALSFLEIWYTTATIPKMLSSLLSERSISFNGCLLQMYFFHSTGICEVCLLTVMAFDHYLAICSPLHYPSIMTPKLCTQLTLSCCVCGFITPLPEIAWISTLPFCGSNHLEHIFCDFLPVLRLACTDTRAIVMIQVVDVIHAVEIITAVMLIFMSYDGIVAVILRIHSAGGRRTAFSTCVSHFIVFSLFFGSVTLMYLRFSATYSLFWDIAIALAFAVLSPFFNPIIYSLRNKEIKEAIKKHIGQAKIFFSVRPGTSSKIF.

The Extracellular segment spans residues M1–V25. N-linked (GlcNAc...) asparagine glycosylation occurs at N5. Residues V26–I46 form a helical membrane-spanning segment. Topologically, residues T47 to H54 are cytoplasmic. The helical transmembrane segment at L55–T75 threads the bilayer. At A76–L98 the chain is on the extracellular side. Residues C96 and C188 are joined by a disulfide bond. A helical membrane pass occupies residues Q99–F119. Residues D120–K138 are Cytoplasmic-facing. A helical membrane pass occupies residues L139 to I159. Over A160–Q198 the chain is Extracellular. Residues V199–S218 traverse the membrane as a helical segment. The Cytoplasmic portion of the chain corresponds to Y219–A238. The chain crosses the membrane as a helical span at residues F239 to M259. The Extracellular portion of the chain corresponds to Y260–D272. The helical transmembrane segment at I273–L293 threads the bilayer. At R294 to F324 the chain is on the cytoplasmic side.

It belongs to the G-protein coupled receptor 1 family.

Its subcellular location is the cell membrane. Its function is as follows. Odorant receptor. This is Olfactory receptor 6K2 (OR6K2) from Homo sapiens (Human).